Here is a 240-residue protein sequence, read N- to C-terminus: MHLEFTTGQTQTAVSLMPRHLDDCLRELILINQKKDAIDILEWRLDYWQAPAQLLTAAEKIAALDLPLILTVRTTNDGGLASAQDYLTYYAPLIKAHIGQAIDLEWSLAAEQRHQLAELAHQQHYQVLLSHHDTVQTPDNDTLRTQLLAMQADPDADLLKLATTAQSPADTTRLLAATQSFTHQFDKPLTTMAMSEFGVASRIFGGQFGSAISFGYLETPSAPGQLPIEQLKGLLTTNQA.

3-dehydroquinate is bound by residues Ser15, 42-44 (EWR), and Arg73. Residue His132 is the Proton donor/acceptor of the active site. The active-site Schiff-base intermediate with substrate is Lys160. Positions 202, 221, and 225 each coordinate 3-dehydroquinate.

This sequence belongs to the type-I 3-dehydroquinase family. In terms of assembly, homodimer.

The catalysed reaction is 3-dehydroquinate = 3-dehydroshikimate + H2O. Its pathway is metabolic intermediate biosynthesis; chorismate biosynthesis; chorismate from D-erythrose 4-phosphate and phosphoenolpyruvate: step 3/7. Its function is as follows. Involved in the third step of the chorismate pathway, which leads to the biosynthesis of aromatic amino acids. Catalyzes the cis-dehydration of 3-dehydroquinate (DHQ) and introduces the first double bond of the aromatic ring to yield 3-dehydroshikimate. This is 3-dehydroquinate dehydratase from Latilactobacillus sakei subsp. sakei (strain 23K) (Lactobacillus sakei subsp. sakei).